A 191-amino-acid chain; its full sequence is HTH-type transcriptional regulator SAR0097 (191 aa).

The region spanning 12 to 74 (AEYNQQIILT…AIMDKKVDQM (63 aa)) is the HTH tetR-type domain. A DNA-binding region (H-T-H motif) is located at residues 37–56 (KMSDIAKISGVGVGTLYRHF).

This Staphylococcus aureus (strain MRSA252) protein is HTH-type transcriptional regulator SAR0097.